The following is a 502-amino-acid chain: MVVNYQHPIQCIRYVEKQTAGFRNLFLASAGSKIYTYAAETGRKLAIWPEAPNASHSTVVSVAPSSEGDEPSAKKRKVSPVPEQTAKGGQPEASTAWSTIPILTVSSDGNFLVAVTGEDKCLRVFEIEESGHLKQLSERHMPKRPSAITLVDDDKTILCGDKFGDVYSLPLIDTGKSSIAPKIHAKMKPNQPAATTLTVHSKRNLASLEQQLRHYSQNEKTAEEKPTSAFELHLILGHVSMLTDLVYVSVPVDATSGRQRPYIFTADRDEHIRVSRGPPQAHIIENYCLGHTSFVSSLCVPQWAPEYLVSGGGDNHLIVWRWNESRLVQKVPLLEEGTDSEVVVRRIWALSLTKAANSQENANVILVALDGSSKLLCFTLESDGSLKAQNSIQASGNVLDLTVPSENSSIVVSVDAVREAGSTQEWRTSPSSPSTLVEAFRLKPASEGPLDWERTSEAITAQINSEGTSDISADLDEKQKKELNDSLYSLGNLRKKNMGEDD.

WD repeat units lie at residues 4-58 (NYQH…SHST), 95-135 (TAWS…HLKQ), and 290-330 (GHTS…LVQK). The disordered stretch occupies residues 58–93 (TVVSVAPSSEGDEPSAKKRKVSPVPEQTAKGGQPEA).

This sequence belongs to the WD repeat TRM82 family. In terms of assembly, forms a heterodimer with the catalytic subunit trm8.

The protein localises to the nucleus. Its pathway is tRNA modification; N(7)-methylguanine-tRNA biosynthesis. In terms of biological role, required for the formation of N(7)-methylguanine at position 46 (m7G46) in tRNA. In the complex, it is required to stabilize and induce conformational changes of the catalytic subunit. The sequence is that of tRNA (guanine-N(7)-)-methyltransferase non-catalytic subunit trm82 (trm82) from Aspergillus fumigatus (strain CBS 144.89 / FGSC A1163 / CEA10) (Neosartorya fumigata).